The sequence spans 345 residues: Probable deoxyhypusine synthase 2 (345 aa).

Lys292 acts as the Nucleophile in catalysis.

Belongs to the deoxyhypusine synthase family. NAD(+) serves as cofactor.

It catalyses the reaction [eIF5A protein]-L-lysine + spermidine = [eIF5A protein]-deoxyhypusine + propane-1,3-diamine. The protein operates within protein modification; eIF5A hypusination. In terms of biological role, catalyzes the NAD-dependent oxidative cleavage of spermidine and the subsequent transfer of the butylamine moiety of spermidine to the epsilon-amino group of a specific lysine residue of the eIF-5A precursor protein to form the intermediate deoxyhypusine residue. The polypeptide is Probable deoxyhypusine synthase 2 (dys2) (Methanosarcina acetivorans (strain ATCC 35395 / DSM 2834 / JCM 12185 / C2A)).